Reading from the N-terminus, the 215-residue chain is N-(5'-phosphoribosyl)anthranilate isomerase (215 aa).

Belongs to the TrpF family.

The enzyme catalyses N-(5-phospho-beta-D-ribosyl)anthranilate = 1-(2-carboxyphenylamino)-1-deoxy-D-ribulose 5-phosphate. It functions in the pathway amino-acid biosynthesis; L-tryptophan biosynthesis; L-tryptophan from chorismate: step 3/5. In Sinorhizobium medicae (strain WSM419) (Ensifer medicae), this protein is N-(5'-phosphoribosyl)anthranilate isomerase.